A 283-amino-acid polypeptide reads, in one-letter code: Diaminopimelate epimerase (283 aa).

Residues asparagine 13 and asparagine 65 each contribute to the substrate site. Cysteine 74 functions as the Proton donor in the catalytic mechanism. Substrate contacts are provided by residues 75 to 76 (GN), asparagine 196, and 214 to 215 (ER). Cysteine 223 (proton acceptor) is an active-site residue. A substrate-binding site is contributed by 224 to 225 (GT).

The protein belongs to the diaminopimelate epimerase family. As to quaternary structure, homodimer.

It is found in the cytoplasm. It carries out the reaction (2S,6S)-2,6-diaminopimelate = meso-2,6-diaminopimelate. Its pathway is amino-acid biosynthesis; L-lysine biosynthesis via DAP pathway; DL-2,6-diaminopimelate from LL-2,6-diaminopimelate: step 1/1. In terms of biological role, catalyzes the stereoinversion of LL-2,6-diaminopimelate (L,L-DAP) to meso-diaminopimelate (meso-DAP), a precursor of L-lysine and an essential component of the bacterial peptidoglycan. The sequence is that of Diaminopimelate epimerase from Alkaliphilus metalliredigens (strain QYMF).